We begin with the raw amino-acid sequence, 455 residues long: Bifunctional protein GlmU (455 aa).

Residues 1-226 form a pyrophosphorylase region; that stretch reads MSLDIVILAA…AMEVQGANDR (226 aa). Residues 8-11, K22, Q73, 78-79, 99-101, G136, E151, N166, and N224 contribute to the UDP-N-acetyl-alpha-D-glucosamine site; these read LAAG, GT, and YGD. D101 contacts Mg(2+). N224 is a binding site for Mg(2+). Residues 227-247 are linker; that stretch reads KQLSELERHYQLREARRLMAG. Residues 248–455 are N-acetyltransferase; that stretch reads GVTLRDPARF…WKRPVKIRKD (208 aa). Residues R330 and K348 each coordinate UDP-N-acetyl-alpha-D-glucosamine. The active-site Proton acceptor is the H360. UDP-N-acetyl-alpha-D-glucosamine contacts are provided by Y363 and N374. Acetyl-CoA is bound by residues A377, 383 to 384, S402, A420, and R437; that span reads NY.

It in the N-terminal section; belongs to the N-acetylglucosamine-1-phosphate uridyltransferase family. This sequence in the C-terminal section; belongs to the transferase hexapeptide repeat family. As to quaternary structure, homotrimer. It depends on Mg(2+) as a cofactor.

Its subcellular location is the cytoplasm. It carries out the reaction alpha-D-glucosamine 1-phosphate + acetyl-CoA = N-acetyl-alpha-D-glucosamine 1-phosphate + CoA + H(+). The catalysed reaction is N-acetyl-alpha-D-glucosamine 1-phosphate + UTP + H(+) = UDP-N-acetyl-alpha-D-glucosamine + diphosphate. It participates in nucleotide-sugar biosynthesis; UDP-N-acetyl-alpha-D-glucosamine biosynthesis; N-acetyl-alpha-D-glucosamine 1-phosphate from alpha-D-glucosamine 6-phosphate (route II): step 2/2. Its pathway is nucleotide-sugar biosynthesis; UDP-N-acetyl-alpha-D-glucosamine biosynthesis; UDP-N-acetyl-alpha-D-glucosamine from N-acetyl-alpha-D-glucosamine 1-phosphate: step 1/1. The protein operates within bacterial outer membrane biogenesis; LPS lipid A biosynthesis. Catalyzes the last two sequential reactions in the de novo biosynthetic pathway for UDP-N-acetylglucosamine (UDP-GlcNAc). The C-terminal domain catalyzes the transfer of acetyl group from acetyl coenzyme A to glucosamine-1-phosphate (GlcN-1-P) to produce N-acetylglucosamine-1-phosphate (GlcNAc-1-P), which is converted into UDP-GlcNAc by the transfer of uridine 5-monophosphate (from uridine 5-triphosphate), a reaction catalyzed by the N-terminal domain. This chain is Bifunctional protein GlmU, found in Pseudomonas savastanoi pv. phaseolicola (strain 1448A / Race 6) (Pseudomonas syringae pv. phaseolicola (strain 1448A / Race 6)).